Reading from the N-terminus, the 268-residue chain is Tetraspanin-33 (268 aa).

Residues methionine 1–tyrosine 23 are Cytoplasmic-facing. Residues leucine 24–valine 44 form a helical membrane-spanning segment. Topologically, residues tyrosine 45–proline 63 are extracellular. The helical transmembrane segment at alanine 64 to glycine 84 threads the bilayer. Residues serine 85–threonine 95 lie on the Cytoplasmic side of the membrane. The chain crosses the membrane as a helical span at residues phenylalanine 96–isoleucine 116. The Extracellular portion of the chain corresponds to phenylalanine 117–arginine 226. Cystine bridges form between cysteine 155-cysteine 223, cysteine 156-cysteine 188, cysteine 172-cysteine 182, and cysteine 189-cysteine 202. 2 N-linked (GlcNAc...) asparagine glycosylation sites follow: asparagine 171 and asparagine 176. The chain crosses the membrane as a helical span at residues leucine 227–isoleucine 247. At proline 248–valine 268 the chain is on the cytoplasmic side.

The protein belongs to the tetraspanin (TM4SF) family. As to quaternary structure, homodimer; disulfide-linked.

It is found in the cell membrane. Its subcellular location is the cell junction. It localises to the adherens junction. The protein resides in the cytoplasm. In terms of biological role, part of TspanC8 subgroup, composed of 6 members that interact with the transmembrane metalloprotease ADAM10. This interaction is required for ADAM10 exit from the endoplasmic reticulum and for enzymatic maturation and trafficking to the cell surface as well as substrate specificity. Different TspanC8/ADAM10 complexes have distinct substrates. The polypeptide is Tetraspanin-33 (tspan33) (Xenopus laevis (African clawed frog)).